The following is a 247-amino-acid chain: 14-3-3 protein gamma (247 aa).

This sequence belongs to the 14-3-3 family. In terms of assembly, homodimer, and heterodimer with other family members.

It localises to the cytoplasm. Its function is as follows. Adapter protein implicated in the regulation of a large spectrum of both general and specialized signaling pathways. Binds to a large number of partners, usually by recognition of a phosphoserine or phosphothreonine motif. Binding generally results in the modulation of the activity of the binding partner. The protein is 14-3-3 protein gamma (YWHAG) of Gallus gallus (Chicken).